Consider the following 118-residue polypeptide: Large ribosomal subunit protein bL20 (118 aa).

It belongs to the bacterial ribosomal protein bL20 family.

Functionally, binds directly to 23S ribosomal RNA and is necessary for the in vitro assembly process of the 50S ribosomal subunit. It is not involved in the protein synthesizing functions of that subunit. This is Large ribosomal subunit protein bL20 (rplT) from Aquifex aeolicus (strain VF5).